The primary structure comprises 557 residues: Glutamine--tRNA ligase (557 aa).

The 'HIGH' region motif lies at 42 to 52 (PEPNGYLHIGH). Residues 43–45 (EPN) and 49–55 (HIGHAKS) contribute to the ATP site. Aspartate 75 and tyrosine 220 together coordinate L-glutamine. Residues threonine 239 and 270–271 (RL) each bind ATP. The 'KMSKS' region motif lies at 277–281 (LTSKR).

The protein belongs to the class-I aminoacyl-tRNA synthetase family. In terms of assembly, monomer.

The protein resides in the cytoplasm. The catalysed reaction is tRNA(Gln) + L-glutamine + ATP = L-glutaminyl-tRNA(Gln) + AMP + diphosphate. In Haemophilus influenzae (strain 86-028NP), this protein is Glutamine--tRNA ligase.